The following is a 303-amino-acid chain: Haloalkane dehalogenase (303 aa).

The region spanning 48-192 (PVLLLHGEPS…GTVTKLSQAV (145 aa)) is the AB hydrolase-1 domain. Asp123 functions as the Nucleophile in the catalytic mechanism. The active-site Proton donor is Asp250. The active-site Proton acceptor is the His280.

It belongs to the haloalkane dehalogenase family. Type 1 subfamily. As to quaternary structure, monomer.

It carries out the reaction 1-haloalkane + H2O = a halide anion + a primary alcohol + H(+). Its function is as follows. Catalyzes hydrolytic cleavage of carbon-halogen bonds in halogenated aliphatic compounds, leading to the formation of the corresponding primary alcohols, halide ions and protons. The polypeptide is Haloalkane dehalogenase (Psychrobacter cryohalolentis (strain ATCC BAA-1226 / DSM 17306 / VKM B-2378 / K5)).